A 1056-amino-acid polypeptide reads, in one-letter code: 120.7 kDa protein in NOF-FB transposable element (1056 aa).

The interval 716–749 (KTIKPTEGNDAEDNDTDDENKEMDLSEQPKEKPR) is disordered. Acidic residues predominate over residues 724–736 (NDAEDNDTDDENK). Basic and acidic residues predominate over residues 737-749 (EMDLSEQPKEKPR).

It localises to the nucleus. May be involved in the transposition of NOF-FB and other FB elements. This is 120.7 kDa protein in NOF-FB transposable element (NOF) from Drosophila melanogaster (Fruit fly).